Reading from the N-terminus, the 43-residue chain is Potassium channel toxin gamma-KTx 4.8 (43 aa).

4 disulfides stabilise this stretch: Cys5/Cys23, Cys11/Cys34, Cys20/Cys39, and Cys24/Cys41.

Belongs to the ergtoxin family. Gamma-KTx 4 subfamily. In terms of tissue distribution, expressed by the venom gland.

The protein resides in the secreted. Its function is as follows. Reversibly blocks Kv11/ERG potassium channels. The protein is Potassium channel toxin gamma-KTx 4.8 of Centruroides elegans (Bark scorpion).